The sequence spans 401 residues: Imidazolonepropionase (401 aa).

Fe(3+) is bound by residues His66 and His68. Positions 66 and 68 each coordinate Zn(2+). The 4-imidazolone-5-propanoate site is built by Arg75, Tyr138, and His171. Residue Tyr138 participates in N-formimidoyl-L-glutamate binding. His236 is a binding site for Fe(3+). A Zn(2+)-binding site is contributed by His236. Gln239 is a binding site for 4-imidazolone-5-propanoate. Asp311 is a binding site for Fe(3+). Asp311 serves as a coordination point for Zn(2+). Residues Asn313 and Gly315 each contribute to the N-formimidoyl-L-glutamate site. 4-imidazolone-5-propanoate is bound at residue Thr316.

Belongs to the metallo-dependent hydrolases superfamily. HutI family. Zn(2+) is required as a cofactor. It depends on Fe(3+) as a cofactor.

It localises to the cytoplasm. It catalyses the reaction 4-imidazolone-5-propanoate + H2O = N-formimidoyl-L-glutamate. It participates in amino-acid degradation; L-histidine degradation into L-glutamate; N-formimidoyl-L-glutamate from L-histidine: step 3/3. Its function is as follows. Catalyzes the hydrolytic cleavage of the carbon-nitrogen bond in imidazolone-5-propanoate to yield N-formimidoyl-L-glutamate. It is the third step in the universal histidine degradation pathway. This Pseudomonas putida (Arthrobacter siderocapsulatus) protein is Imidazolonepropionase.